Consider the following 475-residue polypeptide: Lipoprotein lipase (475 aa).

The N-terminal stretch at 1–27 (MESKALLLVALGMWFQSLTATRGGVAA) is a signal peptide. An interaction with GPIHBP1 region spans residues 32–53 (GDFIDIESKFALRTPEDTAEDT). Cysteines 54 and 67 form a disulfide. Asn70 carries N-linked (GlcNAc...) asparagine glycosylation. Tyr121 bears the 3'-nitrotyrosine mark. Catalysis depends on Ser159, which acts as the Nucleophile. Asp183 acts as the Charge relay system in catalysis. A 3'-nitrotyrosine modification is found at Tyr191. 4 residues coordinate Ca(2+): Ala194, Arg197, Ser199, and Asp202. An intrachain disulfide couples Cys243 to Cys266. The active-site Charge relay system is His268. Cystine bridges form between Cys291-Cys310 and Cys302-Cys305. One can recognise a PLAT domain in the interval 341 to 464 (FHYQVKIHFS…KGKASVVFVK (124 aa)). Tyr343 carries the 3'-nitrotyrosine modification. N-linked (GlcNAc...) asparagine glycosylation is present at Asn386. An important for interaction with lipoprotein particles region spans residues 417 to 421 (WSDWW). The segment at 430–434 (KIRVK) is important for heparin binding. The interval 443–467 (IFCSREKVSHLQKGKASVVFVKCHD) is interaction with GPIHBP1. A disulfide bridge links Cys445 with Cys465.

This sequence belongs to the AB hydrolase superfamily. Lipase family. Homodimer. Interacts with GPIHBP1 with 1:1 stoichiometry. Interacts with APOC2; the interaction activates LPL activity in the presence of lipids. Interaction with heparan sulfate proteoglycans is required to protect LPL against loss of activity. Associates with lipoprotein particles in blood plasma. Interacts with LMF1 and SEL1L; interaction with SEL1L is required to prevent aggregation of newly synthesized LPL in the endoplasmic reticulum (ER), and for normal export of LPL from the ER to the extracellular space. Interacts with SORL1; SORL1 acts as a sorting receptor, promoting LPL localization to endosomes and later to lysosomes, leading to degradation of newly synthesized LPL. In terms of processing, tyrosine nitration after lipopolysaccharide (LPS) challenge down-regulates the lipase activity.

It is found in the cell membrane. Its subcellular location is the secreted. The protein localises to the extracellular space. It localises to the extracellular matrix. It catalyses the reaction a triacylglycerol + H2O = a diacylglycerol + a fatty acid + H(+). Its activity is regulated as follows. The apolipoprotein APOC2 acts as a coactivator of LPL activity. Ca(2+) binding promotes protein stability and formation of the active homodimer. Interaction with GPIHBP1 protects LPL against inactivation by ANGPTL4. Key enzyme in triglyceride metabolism. Catalyzes the hydrolysis of triglycerides from circulating chylomicrons and very low density lipoproteins (VLDL), and thereby plays an important role in lipid clearance from the blood stream, lipid utilization and storage. Mediates margination of triglyceride-rich lipoprotein particles in capillaries. Recruited to its site of action on the luminal surface of vascular endothelium by binding to GPIHBP1 and cell surface heparan sulfate proteoglycans. The polypeptide is Lipoprotein lipase (LPL) (Neovison vison (American mink)).